Reading from the N-terminus, the 383-residue chain is Galactokinase (383 aa).

34–37 (EHTD) contacts substrate. Residue 124 to 130 (GAGLSSS) coordinates ATP. S130 and E162 together coordinate Mg(2+). Catalysis depends on D174, which acts as the Proton acceptor. Y223 is a substrate binding site.

The protein belongs to the GHMP kinase family. GalK subfamily.

The protein resides in the cytoplasm. The enzyme catalyses alpha-D-galactose + ATP = alpha-D-galactose 1-phosphate + ADP + H(+). Its pathway is carbohydrate metabolism; galactose metabolism. Catalyzes the transfer of the gamma-phosphate of ATP to D-galactose to form alpha-D-galactose-1-phosphate (Gal-1-P). This chain is Galactokinase, found in Yersinia pseudotuberculosis serotype IB (strain PB1/+).